Consider the following 259-residue polypeptide: Undecaprenyl-diphosphatase (259 aa).

7 helical membrane-spanning segments follow: residues 1 to 21 (MEIF…FLPI), 40 to 60 (QITL…IIFW), 75 to 95 (WLTI…ILFE), 101 to 121 (LFSS…LLYL), 179 to 199 (SFLL…KDAL), 206 to 226 (LTWL…YFAI), and 239 to 259 (TVFA…AGIF).

Belongs to the UppP family.

It localises to the cell inner membrane. It carries out the reaction di-trans,octa-cis-undecaprenyl diphosphate + H2O = di-trans,octa-cis-undecaprenyl phosphate + phosphate + H(+). Functionally, catalyzes the dephosphorylation of undecaprenyl diphosphate (UPP). Confers resistance to bacitracin. This Halothermothrix orenii (strain H 168 / OCM 544 / DSM 9562) protein is Undecaprenyl-diphosphatase.